Here is a 436-residue protein sequence, read N- to C-terminus: GTPase Der (436 aa).

EngA-type G domains follow at residues 3-168 (PLIA…PESD) and 177-352 (IRLA…QNRS). GTP contacts are provided by residues 9-16 (GRPNVGKS), 56-60 (DTGGY), 120-123 (NKAE), 183-190 (GRPNVGKS), 230-234 (DTAGL), and 295-298 (NKWD). Residues 353–436 (RKISTSALNR…VTISLRFMQK (84 aa)) enclose the KH-like domain.

This sequence belongs to the TRAFAC class TrmE-Era-EngA-EngB-Septin-like GTPase superfamily. EngA (Der) GTPase family. In terms of assembly, associates with the 50S ribosomal subunit.

Functionally, GTPase that plays an essential role in the late steps of ribosome biogenesis. The chain is GTPase Der from Chlorobium luteolum (strain DSM 273 / BCRC 81028 / 2530) (Pelodictyon luteolum).